Consider the following 622-residue polypeptide: Auxin efflux carrier component 1 (622 aa).

Residues 1 to 6 (MITAAD) are Extracellular-facing. A helical membrane pass occupies residues 7-27 (FYHVMTAMVPLYVAMILAYGS). Residues 28 to 44 (VKWWKIFTPDQCSGINR) lie on the Cytoplasmic side of the membrane. Residues 45–65 (FVALFAVPLLSFHFIAANNPY) traverse the membrane as a helical segment. V51 is a (indol-3-yl)acetate binding site. Residues 66 to 70 (AMNLR) are Extracellular-facing. The chain crosses the membrane as a helical span at residues 71–91 (FLAADSLQKVIVLSLLFLWCK). Residues 92–100 (LSRNGSLDW) lie on the Cytoplasmic side of the membrane. Residues 101–121 (TITLFSLSTLPNTLVMGIPLL) traverse the membrane as a helical segment. (indol-3-yl)acetate-binding residues include N112 and L114. Residues 122–131 (KGMYGNFSGD) lie on the Extracellular side of the membrane. N127 carries N-linked (GlcNAc...) asparagine glycosylation. Residues 132 to 152 (LMVQIVVLQCIIWYTLMLFLF) traverse the membrane as a helical segment. Y145 serves as a coordination point for (indol-3-yl)acetate. Residues 153 to 482 (EYRGAKLLIS…LIRNPNSYSS (330 aa)) are Cytoplasmic-facing. Residues S209, S212, S221, and S225 each carry the phosphoserine modification. Residues 213-233 (RSDIYSRRSQGLSATPRPSNL) form a disordered region. Position 227 is a phosphothreonine (T227). S231 carries the post-translational modification Phosphoserine. A Phosphothreonine modification is found at T248. S252, S253, and S271 each carry phosphoserine. Residues 268 to 362 (GRNSNFGPGE…PVVGGKRQDG (95 aa)) form a disordered region. Residue T286 is modified to Phosphothreonine. At S290 the chain carries Phosphoserine. A compositionally biased stretch (low complexity) spans 298–311 (PAKPTAAGTAAGAG). T302 carries the phosphothreonine modification. Residues S317, S320, and S337 each carry the phosphoserine modification. T340 is modified (phosphothreonine). A phosphoserine mark is found at S374, S377, S408, S414, S426, S434, and S446. Residues 483–503 (LFGITWSLISFKWNIEMPALI) traverse the membrane as a helical segment. Topologically, residues 504-506 (AKS) are extracellular. A helical transmembrane segment spans residues 507–527 (ISILSDAGLGMAMFSLGLFMA). Topologically, residues 528 to 541 (LNPRIIACGNRRAA) are cytoplasmic. Residues 542–562 (FAAAMRFVVGPAVMLVASYAV) traverse the membrane as a helical segment. At 563-566 (GLRG) the chain is on the extracellular side. Residues 567-587 (VLLHVAIIQAALPQGIVPFVF) form a helical membrane-spanning segment. 2 residues coordinate (indol-3-yl)acetate: I582 and V583. At 588–601 (AKEYNVHPDILSTA) the chain is on the cytoplasmic side. A helical transmembrane segment spans residues 602-622 (VIFGMLIALPITLLYYILLGL).

This sequence belongs to the auxin efflux carrier (TC 2.A.69.1) family. In terms of assembly, homodimer. Interacts with TOPP4. Interacts with FYPP1 and FYPP3. Component of a complex made of PINs (e.g. PIN1 and PIN2), MAB4/MELs (e.g. NPY1/MAB4 and NPY5/MEL1) and AGC kinases (e.g. D6PK and PID) at the plasma membrane. Binds directly to NPY5/MEL1. As to expression, expressed at the basal side of elongated parenchymatous xylem cells.

The protein localises to the cell membrane. Auxin efflux carrier activity is competitively inhibited by naptalamate (N-1-naphthylphthalamic acid, NPA) but activated by D6PK-mediated phosphorylation. Its function is as follows. Acts as a component of the auxin efflux carrier; this activity is enhanced when activated by D6PK-mediated phosphorylation. Binds auxins including indole-3-acetic acid (IAA), indole-3-butyric acid (IBA), indole-3-propionic acid (IPA) and 4-chloroindole-3-acetic acid (4-Cl-IAA). Seems to be involved in the basipetal auxin transport. Mediates the formation of auxin gradient which is required to ensure correct organogenesis. Coordinated polar localization of PIN1 is directly regulated by the vesicle trafficking process and apical-basal PIN1 polarity also depends on the phosphorylation of conserved serine residues by PID kinase. The ARF-GEF protein GNOM is required for the correct recycling of PIN1 between the plasma membrane and endosomal compartments. Recrutes NPY proteins (e.g. NPY1/MAB4 and NPY5/MEL1) to the plasma membrane in a polar basal localization in root epidermis; this activity is optimized by AGC kinases-mediated (e.g. D6PK and PID) phosphorylation that limits their lateral diffusion-based escape. This Arabidopsis thaliana (Mouse-ear cress) protein is Auxin efflux carrier component 1.